A 318-amino-acid chain; its full sequence is Retinol dehydrogenase 11 (318 aa).

Residues 1–21 (MVELMFPLLLLLLPFLLYMAA) form a helical; Signal-anchor for type II membrane protein membrane-spanning segment. Residues 22-318 (PQIRKMLSSG…SCDLLGLPID (297 aa)) lie on the Cytoplasmic side of the membrane. 48–54 (GANTGIG) lines the NADP(+) pocket. Lysine 112 carries the N6-acetyllysine modification. Serine 177 serves as a coordination point for substrate. Tyrosine 202 (proton acceptor) is an active-site residue.

This sequence belongs to the short-chain dehydrogenases/reductases (SDR) family. Interacts with SELENOF. Post-translationally, not glycosylated. As to expression, predominantly expressed in the epithelial cells of prostate, in both basal and luminal secretory cell populations. Expressed at low levels in spleen, thymus, testis, ovary, small intestine, colon, peripherical blood leukocytes, kidney, adrenal gland and fetal liver. Not detected in prostatic fibromuscular stromal cells, endothelial cells, or infiltrating lymphocytes.

The protein localises to the endoplasmic reticulum membrane. It carries out the reaction all-trans-retinol + NADP(+) = all-trans-retinal + NADPH + H(+). The enzyme catalyses 11-cis-retinol + NADP(+) = 11-cis-retinal + NADPH + H(+). It catalyses the reaction 9-cis-retinol + NADP(+) = 9-cis-retinal + NADPH + H(+). The catalysed reaction is 13-cis-retinol + NADP(+) = 13-cis-retinal + NADPH + H(+). It participates in cofactor metabolism; retinol metabolism. Its activity is regulated as follows. SELENOF decreases the retinol dehydrogenase activity. In terms of biological role, retinol dehydrogenase with a clear preference for NADP. Displays high activity towards 9-cis, 11-cis and all-trans-retinol, and to a lesser extent on 13-cis-retinol. Exhibits a low reductive activity towards unsaturated medium-chain aldehydes such as cis -6-nonenal and no activity toward nonanal or 4-hydroxy-nonenal. Has no dehydrogenase activity towards steroid. The sequence is that of Retinol dehydrogenase 11 (RDH11) from Homo sapiens (Human).